A 245-amino-acid polypeptide reads, in one-letter code: Proteasome subunit alpha type-7-1B (245 aa).

This sequence belongs to the peptidase T1A family. In terms of assembly, the 26S proteasome consists of a 20S proteasome core and two 19S regulatory subunits. The 20S proteasome core is composed of 28 subunits that are arranged in four stacked rings, resulting in a barrel-shaped structure. The two end rings are each formed by seven alpha subunits, and the two central rings are each formed by seven beta subunits. The catalytic chamber with the active sites is on the inside of the barrel. Testis specific.

The protein resides in the cytoplasm. It localises to the nucleus. Functionally, the proteasome is a multicatalytic proteinase complex which is characterized by its ability to cleave peptides with Arg, Phe, Tyr, Leu, and Glu adjacent to the leaving group at neutral or slightly basic pH. The proteasome has an ATP-dependent proteolytic activity. The polypeptide is Proteasome subunit alpha type-7-1B (Pros28.1B) (Drosophila virilis (Fruit fly)).